We begin with the raw amino-acid sequence, 201 residues long: Orotate phosphoribosyltransferase (201 aa).

Residues Lys90 and 113–121 (EDIITTGGS) contribute to the 5-phospho-alpha-D-ribose 1-diphosphate site. 2 residues coordinate orotate: Thr117 and Arg145.

This sequence belongs to the purine/pyrimidine phosphoribosyltransferase family. PyrE subfamily. In terms of assembly, homodimer. Requires Mg(2+) as cofactor.

The enzyme catalyses orotidine 5'-phosphate + diphosphate = orotate + 5-phospho-alpha-D-ribose 1-diphosphate. The protein operates within pyrimidine metabolism; UMP biosynthesis via de novo pathway; UMP from orotate: step 1/2. Functionally, catalyzes the transfer of a ribosyl phosphate group from 5-phosphoribose 1-diphosphate to orotate, leading to the formation of orotidine monophosphate (OMP). The polypeptide is Orotate phosphoribosyltransferase (Sulfurovum sp. (strain NBC37-1)).